Consider the following 33-residue polypeptide: MTWELIAQLTFLTSIIVSGPLVIALLAIRKGNL.

A helical membrane pass occupies residues 5 to 25 (LIAQLTFLTSIIVSGPLVIAL).

The protein belongs to the Psb30/Ycf12 family. As to quaternary structure, PSII is composed of 1 copy each of membrane proteins PsbA, PsbB, PsbC, PsbD, PsbE, PsbF, PsbH, PsbI, PsbJ, PsbK, PsbL, PsbM, PsbT, PsbX, PsbY, PsbZ, Psb30/Ycf12, peripheral proteins of the oxygen-evolving complex and a large number of cofactors. It forms dimeric complexes.

It localises to the plastid. It is found in the chloroplast thylakoid membrane. A core subunit of photosystem II (PSII), probably helps stabilize the reaction center. The polypeptide is Photosystem II reaction center protein Psb30 (Psilotum nudum (Whisk fern)).